We begin with the raw amino-acid sequence, 1391 residues long: ESX-5 secretion system protein EccC5 (1391 aa).

Transmembrane regions (helical) follow at residues 38–58 (WLIVVGVVVVGLLGGMVAMVF) and 65–85 (FGGIGSIFPLFMMVGIMMMMF). FtsK domains lie at 476–678 (GELL…GAAQ), 858–1052 (QPPW…EDAK), and 1161–1354 (LAPV…DPDE). ATP-binding positions include 499 to 506 (GTTGSGKS), 876 to 883 (GAGGSGKT), and 1178 to 1185 (GRRECGRT).

Part of the ESX-5 / type VII secretion system (T7SS), which is composed of cytosolic and membrane components. The ESX-5 membrane complex is composed of EccB5, EccC5, EccD5 and EccE5.

It is found in the cell inner membrane. Part of the ESX-5 specialized secretion system, which is responsible for the secretion of EsxN and a number of PE_PGRS and PPE proteins, including PPE41. This is ESX-5 secretion system protein EccC5 from Mycobacterium tuberculosis (strain CDC 1551 / Oshkosh).